The chain runs to 393 residues: 1-deoxy-D-xylulose 5-phosphate reductoisomerase (393 aa).

NADPH-binding residues include threonine 10, glycine 11, serine 12, isoleucine 13, arginine 37, and asparagine 124. Lysine 125 serves as a coordination point for 1-deoxy-D-xylulose 5-phosphate. Glutamate 126 is an NADPH binding site. Aspartate 150 contributes to the Mn(2+) binding site. Serine 151, glutamate 152, serine 182, and histidine 205 together coordinate 1-deoxy-D-xylulose 5-phosphate. Glutamate 152 is a Mn(2+) binding site. Glycine 211 provides a ligand contact to NADPH. 4 residues coordinate 1-deoxy-D-xylulose 5-phosphate: serine 218, asparagine 223, lysine 224, and glutamate 227. Glutamate 227 lines the Mn(2+) pocket.

It belongs to the DXR family. The cofactor is Mg(2+). It depends on Mn(2+) as a cofactor.

It carries out the reaction 2-C-methyl-D-erythritol 4-phosphate + NADP(+) = 1-deoxy-D-xylulose 5-phosphate + NADPH + H(+). It functions in the pathway isoprenoid biosynthesis; isopentenyl diphosphate biosynthesis via DXP pathway; isopentenyl diphosphate from 1-deoxy-D-xylulose 5-phosphate: step 1/6. Its function is as follows. Catalyzes the NADPH-dependent rearrangement and reduction of 1-deoxy-D-xylulose-5-phosphate (DXP) to 2-C-methyl-D-erythritol 4-phosphate (MEP). The sequence is that of 1-deoxy-D-xylulose 5-phosphate reductoisomerase from Nitrosococcus oceani (strain ATCC 19707 / BCRC 17464 / JCM 30415 / NCIMB 11848 / C-107).